Here is a 369-residue protein sequence, read N- to C-terminus: Holliday junction branch migration complex subunit RuvB (369 aa).

Residues 1–21 (MHKNENNRLLGSVSLPDDPDR) are disordered. The tract at residues 1–184 (MHKNENNRLL…FGIPIRLNFY (184 aa)) is large ATPase domain (RuvB-L). Residues leucine 23, arginine 24, glycine 65, lysine 68, threonine 69, threonine 70, 131–133 (EDY), arginine 174, tyrosine 184, and arginine 221 contribute to the ATP site. Mg(2+) is bound at residue threonine 69. The segment at 185–255 (TIEELEYIVK…IADTALSRLE (71 aa)) is small ATPAse domain (RuvB-S). A head domain (RuvB-H) region spans residues 258–369 (HLGLDPLDRN…QKHLWEKDYD (112 aa)). Positions 294, 313, and 318 each coordinate DNA.

This sequence belongs to the RuvB family. Homohexamer. Forms an RuvA(8)-RuvB(12)-Holliday junction (HJ) complex. HJ DNA is sandwiched between 2 RuvA tetramers; dsDNA enters through RuvA and exits via RuvB. An RuvB hexamer assembles on each DNA strand where it exits the tetramer. Each RuvB hexamer is contacted by two RuvA subunits (via domain III) on 2 adjacent RuvB subunits; this complex drives branch migration. In the full resolvosome a probable DNA-RuvA(4)-RuvB(12)-RuvC(2) complex forms which resolves the HJ.

The protein resides in the cytoplasm. It catalyses the reaction ATP + H2O = ADP + phosphate + H(+). Its function is as follows. The RuvA-RuvB-RuvC complex processes Holliday junction (HJ) DNA during genetic recombination and DNA repair, while the RuvA-RuvB complex plays an important role in the rescue of blocked DNA replication forks via replication fork reversal (RFR). RuvA specifically binds to HJ cruciform DNA, conferring on it an open structure. The RuvB hexamer acts as an ATP-dependent pump, pulling dsDNA into and through the RuvAB complex. RuvB forms 2 homohexamers on either side of HJ DNA bound by 1 or 2 RuvA tetramers; 4 subunits per hexamer contact DNA at a time. Coordinated motions by a converter formed by DNA-disengaged RuvB subunits stimulates ATP hydrolysis and nucleotide exchange. Immobilization of the converter enables RuvB to convert the ATP-contained energy into a lever motion, pulling 2 nucleotides of DNA out of the RuvA tetramer per ATP hydrolyzed, thus driving DNA branch migration. The RuvB motors rotate together with the DNA substrate, which together with the progressing nucleotide cycle form the mechanistic basis for DNA recombination by continuous HJ branch migration. Branch migration allows RuvC to scan DNA until it finds its consensus sequence, where it cleaves and resolves cruciform DNA. The chain is Holliday junction branch migration complex subunit RuvB from Bartonella bacilliformis (strain ATCC 35685 / KC583 / Herrer 020/F12,63).